A 317-amino-acid polypeptide reads, in one-letter code: Ribosome production factor 2 homolog (317 aa).

Residues 28-240 enclose the Brix domain; it reads KTAIFLRGNA…IRRVQPAESD (213 aa). Residues 287-317 are disordered; the sequence is MKGLKRSVEEREDSENEEVEIEEDVISDASE. Residues Ser293, Ser300, Ser313, and Ser316 each carry the phosphoserine modification. Residues 296–317 are compositionally biased toward acidic residues; that stretch reads EREDSENEEVEIEEDVISDASE.

It belongs to the RPF2 family. As to quaternary structure, component of a hexameric 5S RNP precursor complex, composed of 5S RNA, rrs1, rpf2, rpl5a/rpl5b, rpl11a/rpl11b and syo1; this complex acts as a precursor for ribosome assembly.

It localises to the nucleus. The protein resides in the nucleolus. The protein is Ribosome production factor 2 homolog of Schizosaccharomyces pombe (strain 972 / ATCC 24843) (Fission yeast).